Reading from the N-terminus, the 305-residue chain is Glutaminase (305 aa).

Substrate is bound by residues Ser61, Asn113, Glu158, Asn165, Tyr189, Tyr241, and Val259.

It belongs to the glutaminase family. In terms of assembly, homotetramer.

The catalysed reaction is L-glutamine + H2O = L-glutamate + NH4(+). This Clostridium botulinum (strain Loch Maree / Type A3) protein is Glutaminase.